Consider the following 808-residue polypeptide: LisH domain-containing protein ARMC9 (808 aa).

Residues 7–39 (YEADLLGLVKEFLNFGEFQETLETFTKECKTKG) enclose the LisH domain. A coiled-coil region spans residues 196-230 (ITLYKESLHNNQELLQQLQQQLMETEHKARTYKKC). 3 disordered regions span residues 576–599 (FDES…DALE), 650–709 (PLQR…DYCV), and 742–808 (GMEK…SYRK). Acidic residues predominate over residues 579-599 (SIESDDEEEEKDDEEDEDALE). 3 stretches are compositionally biased toward polar residues: residues 655–668 (VTPS…TVRK), 677–709 (TNTF…DYCV), and 775–784 (IAPQFSQSGP). Low complexity predominate over residues 785–808 (QQTSYSSSAGSSTRSRQSTQSYRK).

It is found in the cytoplasm. Its subcellular location is the cytoskeleton. The protein resides in the cilium basal body. The protein localises to the cell projection. It localises to the cilium. It is found in the microtubule organizing center. Its subcellular location is the centrosome. The protein resides in the centriole. In terms of biological role, involved in ciliogenesis. It is required for appropriate acetylation and polyglutamylation of ciliary microtubules, and regulation of cilium length. Acts as a positive regulator of hedgehog (Hh)signaling. This chain is LisH domain-containing protein ARMC9 (armc9), found in Xenopus tropicalis (Western clawed frog).